A 224-amino-acid chain; its full sequence is Protein-L-isoaspartate O-methyltransferase (224 aa).

Residue S63 is part of the active site.

Belongs to the methyltransferase superfamily. L-isoaspartyl/D-aspartyl protein methyltransferase family.

Its subcellular location is the cytoplasm. It carries out the reaction [protein]-L-isoaspartate + S-adenosyl-L-methionine = [protein]-L-isoaspartate alpha-methyl ester + S-adenosyl-L-homocysteine. Functionally, catalyzes the methyl esterification of L-isoaspartyl residues in peptides and proteins that result from spontaneous decomposition of normal L-aspartyl and L-asparaginyl residues. It plays a role in the repair and/or degradation of damaged proteins. The sequence is that of Protein-L-isoaspartate O-methyltransferase from Herpetosiphon aurantiacus (strain ATCC 23779 / DSM 785 / 114-95).